The sequence spans 331 residues: Cytosolic arginine sensor for mTORC1 subunit 1 (331 aa).

Ser-14 carries the phosphoserine modification. 2 consecutive ACT domains span residues 72–137 and 259–320; these read AEAT…HTLA and GELW…DILQ. Residues 110–111, Gly-273, 279–280, and 299–303 each bind L-arginine; these read SV, IV, and TFNFD.

This sequence belongs to the GATS family. In terms of assembly, forms homodimers and heterodimers with CASTOR2. Interacts with the GATOR2 complex which is composed of MIOS, SEC13, SEH1L, WDR24 and WDR59; the interaction is negatively regulated by arginine. Interacts with TM4SF5; the interaction is positively regulated by leucine and is negatively regulated by arginine. In terms of processing, phosphorylation at Ser-14 by AKT1, promoting the interaction between CASTOR1 and RNF167. Ubiquitinated by RNF167 via 'Lys-29'-polyubiquitination, leading to its degradation, releasing the GATOR2 complex. Ubiquitination by RNF167 is promoted by phosphorylation at Ser-14 by AKT1.

Its subcellular location is the cytoplasm. It localises to the cytosol. Its function is as follows. Functions as an intracellular arginine sensor within the amino acid-sensing branch of the TORC1 signaling pathway. As a homodimer or a heterodimer with CASTOR2, binds and inhibits the GATOR subcomplex GATOR2 and thereby mTORC1. Binding of arginine to CASTOR1 allosterically disrupts the interaction of CASTOR1-containing dimers with GATOR2 which can in turn activate mTORC1 and the TORC1 signaling pathway. In Mus musculus (Mouse), this protein is Cytosolic arginine sensor for mTORC1 subunit 1.